The sequence spans 272 residues: Orotidine 5'-phosphate decarboxylase (272 aa).

The Proton donor role is filled by Lys-96.

It belongs to the OMP decarboxylase family. Type 2 subfamily.

It catalyses the reaction orotidine 5'-phosphate + H(+) = UMP + CO2. The protein operates within pyrimidine metabolism; UMP biosynthesis via de novo pathway; UMP from orotate: step 2/2. The chain is Orotidine 5'-phosphate decarboxylase from Christiangramia forsetii (strain DSM 17595 / CGMCC 1.15422 / KT0803) (Gramella forsetii).